Reading from the N-terminus, the 436-residue chain is 3-ketoacyl-CoA thiolase (436 aa).

Cysteine 99 functions as the Acyl-thioester intermediate in the catalytic mechanism. Active-site proton acceptor residues include histidine 392 and cysteine 422.

The protein belongs to the thiolase-like superfamily. Thiolase family. Heterotetramer of two alpha chains (FadJ) and two beta chains (FadI).

The protein localises to the cytoplasm. The catalysed reaction is an acyl-CoA + acetyl-CoA = a 3-oxoacyl-CoA + CoA. Its pathway is lipid metabolism; fatty acid beta-oxidation. In terms of biological role, catalyzes the final step of fatty acid oxidation in which acetyl-CoA is released and the CoA ester of a fatty acid two carbons shorter is formed. This is 3-ketoacyl-CoA thiolase from Salmonella choleraesuis (strain SC-B67).